The primary structure comprises 143 residues: Putative pre-16S rRNA nuclease (143 aa).

The protein belongs to the YqgF nuclease family.

It localises to the cytoplasm. Could be a nuclease involved in processing of the 5'-end of pre-16S rRNA. This is Putative pre-16S rRNA nuclease from Ralstonia pickettii (strain 12J).